A 464-amino-acid polypeptide reads, in one-letter code: Probable pectin lyase F (464 aa).

Residues 1 to 20 (MAIIRSVIAATALLGAAVNA) form the signal peptide. C80 and C103 form a disulfide bridge. A glycan (N-linked (GlcNAc...) asparagine) is linked at N126. Residue R252 is part of the active site. C319 and C327 are joined by a disulfide. Positions 424–464 (EHEVSTPAVPTPTPVPSSVGSHGSTAGSSHPPAFSRTSFES) are disordered. Over residues 439–448 (PSSVGSHGST) the composition is skewed to low complexity.

This sequence belongs to the polysaccharide lyase 1 family.

Its subcellular location is the secreted. The catalysed reaction is Eliminative cleavage of (1-&gt;4)-alpha-D-galacturonan methyl ester to give oligosaccharides with 4-deoxy-6-O-methyl-alpha-D-galact-4-enuronosyl groups at their non-reducing ends.. Its function is as follows. Pectinolytic enzymes consist of four classes of enzymes: pectin lyase, polygalacturonase, pectin methylesterase and rhamnogalacturonase. Among pectinolytic enzymes, pectin lyase is the most important in depolymerization of pectin, since it cleaves internal glycosidic bonds of highly methylated pectins. The polypeptide is Probable pectin lyase F (pelF) (Emericella nidulans (strain FGSC A4 / ATCC 38163 / CBS 112.46 / NRRL 194 / M139) (Aspergillus nidulans)).